Reading from the N-terminus, the 100-residue chain is uncharacterized protein (100 aa).

Helical transmembrane passes span 1 to 21 (MLVL…YKVK) and 54 to 74 (MILF…VIGA).

Its subcellular location is the cell membrane. This is an uncharacterized protein from Bacillus subtilis (strain 168).